Consider the following 98-residue polypeptide: NADH-ubiquinone oxidoreductase chain 4L (98 aa).

3 consecutive transmembrane segments (helical) span residues 1 to 21 (MSMV…GLLM), 29 to 49 (SLLC…MTIL), and 61 to 81 (IILL…LVMV).

The protein belongs to the complex I subunit 4L family. Core subunit of respiratory chain NADH dehydrogenase (Complex I) which is composed of 45 different subunits.

Its subcellular location is the mitochondrion inner membrane. The catalysed reaction is a ubiquinone + NADH + 5 H(+)(in) = a ubiquinol + NAD(+) + 4 H(+)(out). Its function is as follows. Core subunit of the mitochondrial membrane respiratory chain NADH dehydrogenase (Complex I) which catalyzes electron transfer from NADH through the respiratory chain, using ubiquinone as an electron acceptor. Part of the enzyme membrane arm which is embedded in the lipid bilayer and involved in proton translocation. The protein is NADH-ubiquinone oxidoreductase chain 4L (MT-ND4L) of Otaria byronia (South American sea lion).